The following is a 112-amino-acid chain: Ribonuclease VapC8 (112 aa).

Residues 10–109 form the PINc domain; that stretch reads LLDTSVFIAR…TDALIAATAE (100 aa). Mg(2+)-binding residues include Asp12 and Asp101.

The protein belongs to the PINc/VapC protein family. Mg(2+) serves as cofactor.

Functionally, toxic component of a type II toxin-antitoxin (TA) system. An RNase. The cognate antitoxin is VapB8. The protein is Ribonuclease VapC8 (vapC8) of Mycobacterium tuberculosis (strain CDC 1551 / Oshkosh).